Reading from the N-terminus, the 389-residue chain is 8-amino-7-oxononanoate synthase (389 aa).

Residue Arg-19 coordinates substrate. Residue 106–107 (GY) participates in pyridoxal 5'-phosphate binding. Substrate is bound at residue His-131. Residues Ser-176, His-204, and Thr-233 each contribute to the pyridoxal 5'-phosphate site. An N6-(pyridoxal phosphate)lysine modification is found at Lys-236. Substrate is bound at residue Thr-350.

It belongs to the class-II pyridoxal-phosphate-dependent aminotransferase family. BioF subfamily. As to quaternary structure, homodimer. Pyridoxal 5'-phosphate serves as cofactor.

The catalysed reaction is 6-carboxyhexanoyl-[ACP] + L-alanine + H(+) = (8S)-8-amino-7-oxononanoate + holo-[ACP] + CO2. The protein operates within cofactor biosynthesis; biotin biosynthesis. Its function is as follows. Catalyzes the decarboxylative condensation of pimeloyl-[acyl-carrier protein] and L-alanine to produce 8-amino-7-oxononanoate (AON), [acyl-carrier protein], and carbon dioxide. The protein is 8-amino-7-oxononanoate synthase of Ectopseudomonas mendocina (strain ymp) (Pseudomonas mendocina).